A 441-amino-acid chain; its full sequence is Protein SPMIP7 (441 aa).

As to expression, testis specific. Expressed at the spermatid stage.

Its function is as follows. Essential for normal spermatogenesis. This is Protein SPMIP7 (Spmip7) from Mus musculus (Mouse).